The primary structure comprises 443 residues: Tubulin beta-1 chain (443 aa).

The GTP site is built by Gln11, Glu69, Ser138, Gly142, Thr143, Gly144, Asn204, and Asn226. Residue Glu69 coordinates Mg(2+). The segment at 424–443 is disordered; sequence QYQDATAEREGEYEEDYDEA. The span at 434–443 shows a compositional bias: acidic residues; it reads GEYEEDYDEA.

Belongs to the tubulin family. Dimer of alpha and beta chains. A typical microtubule is a hollow water-filled tube with an outer diameter of 25 nm and an inner diameter of 15 nM. Alpha-beta heterodimers associate head-to-tail to form protofilaments running lengthwise along the microtubule wall with the beta-tubulin subunit facing the microtubule plus end conferring a structural polarity. Microtubules usually have 13 protofilaments but different protofilament numbers can be found in some organisms and specialized cells. It depends on Mg(2+) as a cofactor.

Its subcellular location is the cytoplasm. It localises to the cytoskeleton. Tubulin is the major constituent of microtubules, a cylinder consisting of laterally associated linear protofilaments composed of alpha- and beta-tubulin heterodimers. Microtubules grow by the addition of GTP-tubulin dimers to the microtubule end, where a stabilizing cap forms. Below the cap, tubulin dimers are in GDP-bound state, owing to GTPase activity of alpha-tubulin. The protein is Tubulin beta-1 chain (TUBB1) of Anemia phyllitidis (Fern).